Consider the following 603-residue polypeptide: MEPTTFPSWADVAPRLVAVAAGREPADMIIRNGTWINVHTREALPGHSIAIAEGRIAFVGPDASHCSGPDTRIIEANGRYMIPGLCDGHMHIESGMLTPAEFAAAVIPHGTTTMFTDPHEIANVLGLAGVRMMHDEALMQPVNIFTQMPSCAPSAPGLETTGYEITPEDVAEAMTWPGIIGLGEMMNFPGVTNADPKMLAEIAATQRAGKTVGGHYASPDLGPAFAAYVAGGPADDHEGTCEADAIARVRQGMRSMMRLGSAWYDVETQITAVTEKGLDPRNFILCTDDCHSATLVNDGHMNRVVRHAIACGCDPLIALQMATINTATHFGLERELGSTAPGRRADVILTSDLRDLPIELVIARGQVVAENGKIAVDCPHYDWPDTARGTVHLGHALSARDFEIAAPTGANRVRANVIGVVENQAPTKALKAELPVREGLVETAEHPDDVCQIALVERHRATGGVTNAFVSGFGYQGRMAMASTVAHDSHHMIVVGTDREQMALAANRLAEVGGGITIWRDGQELALVELPIAGLMSDSPAAEVAAKAQAMVEAMAACGCTLNNAYMQHSLLALVVIPELRISDLGLIDVRSFERIDLLEPLA.

The protein belongs to the metallo-dependent hydrolases superfamily. Adenine deaminase family. It depends on Mn(2+) as a cofactor.

It carries out the reaction adenine + H2O + H(+) = hypoxanthine + NH4(+). The sequence is that of Adenine deaminase from Ruegeria pomeroyi (strain ATCC 700808 / DSM 15171 / DSS-3) (Silicibacter pomeroyi).